A 528-amino-acid chain; its full sequence is Alpha-amylase (528 aa).

Positions 1-28 (MNKKWLNIPALIALLAAIAFGSVAPAEA) are cleaved as a signal peptide. 2 residues coordinate Ca(2+): asparagine 168 and aspartate 228. Residue aspartate 258 is the Nucleophile of the active site. Histidine 262 is a Ca(2+) binding site. The active-site Proton donor is glutamate 286.

It belongs to the glycosyl hydrolase 13 family. In terms of assembly, monomer. The cofactor is Ca(2+).

It carries out the reaction Endohydrolysis of (1-&gt;4)-alpha-D-glucosidic linkages in polysaccharides containing three or more (1-&gt;4)-alpha-linked D-glucose units.. The sequence is that of Alpha-amylase from Niallia circulans (Bacillus circulans).